Reading from the N-terminus, the 259-residue chain is Probable ABC transporter permease protein RBE_1340 (259 aa).

Transmembrane regions (helical) follow at residues Ile25–Ile45, Leu49–Val69, Val148–Met168, Pro195–Ile215, and Ala237–Phe257.

This sequence belongs to the MlaE permease family.

The protein resides in the cell inner membrane. In terms of biological role, could be part of an ABC transporter complex. This chain is Probable ABC transporter permease protein RBE_1340, found in Rickettsia bellii (strain RML369-C).